Consider the following 950-residue polypeptide: Nonsense-mediated mRNA decay factor SMG8 (950 aa).

Disordered regions lie at residues 560 to 607 and 624 to 651; these read HTGK…LSPT and NESQ…ADTE. Residues 568-582 are compositionally biased toward acidic residues; sequence QDEDGEEDAEDEEGQ. Polar residues predominate over residues 593–607; the sequence is QNTASNGCSQPLSPT. The span at 624–648 shows a compositional bias: low complexity; it reads NESQASSEQLSNSEQNSTSSGTSSA.

It belongs to the SMG8 family.

In terms of biological role, involved in nonsense-mediated decay (NMD) of mRNAs containing premature stop codons. Probable component of kinase complex containing nonC and recruited to stalled ribosomes. This Drosophila yakuba (Fruit fly) protein is Nonsense-mediated mRNA decay factor SMG8.